We begin with the raw amino-acid sequence, 521 residues long: Riboflavin transporter MCH5 (521 aa).

Disordered regions lie at residues 1–33 (MSSD…SIHY) and 65–96 (NKGT…NEEI). Over 1–103 (MSSDSLTPKD…EEIESFPEGG (103 aa)) the chain is Cytoplasmic. A helical transmembrane segment spans residues 104 to 124 (FKAWVVTFGCFLGLIACFGLL). N125 is a glycosylation site (N-linked (GlcNAc...) asparagine). The Extracellular segment spans residues 125–143 (NSTGVIESHLQDNQLSSES). A helical transmembrane segment spans residues 144-164 (VSTIGWLFSLFLFVCSASCII). The Cytoplasmic portion of the chain corresponds to 165-172 (SGTYFDRN). The chain crosses the membrane as a helical span at residues 173-193 (GFRTIMIVGTVFHVAGLFATA). Residue N194 is glycosylated (N-linked (GlcNAc...) asparagine). Residues 194–200 (NSTKYWH) lie on the Extracellular side of the membrane. A helical membrane pass occupies residues 201–221 (FILSFAIVCGFGNGIVLSPLV). Residues 222–233 (SVPAHYFFKRRG) lie on the Cytoplasmic side of the membrane. A helical membrane pass occupies residues 234–254 (TALAMATIGGSVGGVVFPIML). At 255 to 269 (RSFFSMKSDTDPTYG) the chain is on the extracellular side. A helical membrane pass occupies residues 270–290 (FVWGIRTLGFLDLALLTLSII). Residues 291-325 (LVKERLPHVIENSKDGESRWRYILRVYILQCFDAK) lie on the Cytoplasmic side of the membrane. The chain crosses the membrane as a helical span at residues 326–346 (AFLDMKYLFCVLGTVFSELSI). Residues 347-367 (NSALTYYGSYATSHGISANDA) lie on the Extracellular side of the membrane. The helical transmembrane segment at 368–388 (YTLIMIINVCGIPGRWVPGYL) threads the bilayer. The Cytoplasmic segment spans residues 389–396 (SDKFGRFN). Residues 397 to 417 (VAIATLLTLFIVMFVGWLPFG) traverse the membrane as a helical segment. The Extracellular portion of the chain corresponds to 418-422 (TNLTN). Residue N419 is glycosylated (N-linked (GlcNAc...) asparagine). Residues 423 to 443 (MYVISALYGFCSGSVFSLLPV) form a helical membrane-spanning segment. The Cytoplasmic portion of the chain corresponds to 444-461 (CCGQISKTEEFGKRYSTM). The helical transmembrane segment at 462–482 (YFVVGFGTLVGIPITGAIISI) threads the bilayer. Residues 483-487 (KTTAD) are Extracellular-facing. Residues 488–508 (YQHYIIFCGLATFVSAVCYII) form a helical membrane-spanning segment. Over 509-521 (SRAYCVGFKWVRF) the chain is Cytoplasmic.

The protein belongs to the major facilitator superfamily. Monocarboxylate porter (TC 2.A.1.13) family.

It localises to the cell membrane. Riboflavin transporter involved in riboflavin (vitamin B2) uptake. Does not act in the transport of monocarboxylic acids across the plasma membrane. This is Riboflavin transporter MCH5 (MCH5) from Saccharomyces cerevisiae (strain ATCC 204508 / S288c) (Baker's yeast).